The sequence spans 338 residues: Flap endonuclease 1 (338 aa).

The tract at residues 1 to 98 (MGTDIGDLLL…DTLAKRHEVR (98 aa)) is N-domain. Mg(2+) is bound by residues Asp27, Asp80, Glu152, Glu154, Asp173, Asp175, and Asp236. The tract at residues 116-257 (EAYKYAQASS…RALKLVKEHG (142 aa)) is I-domain. Residues 330-338 (SQSTLDQWF) form an interaction with PCNA region.

This sequence belongs to the XPG/RAD2 endonuclease family. FEN1 subfamily. In terms of assembly, interacts with PCNA. PCNA stimulates the nuclease activity without altering cleavage specificity. Mg(2+) serves as cofactor.

Its function is as follows. Structure-specific nuclease with 5'-flap endonuclease and 5'-3' exonuclease activities involved in DNA replication and repair. During DNA replication, cleaves the 5'-overhanging flap structure that is generated by displacement synthesis when DNA polymerase encounters the 5'-end of a downstream Okazaki fragment. Binds the unpaired 3'-DNA end and kinks the DNA to facilitate 5' cleavage specificity. Cleaves one nucleotide into the double-stranded DNA from the junction in flap DNA, leaving a nick for ligation. Also involved in the base excision repair (BER) pathway. Acts as a genome stabilization factor that prevents flaps from equilibrating into structures that lead to duplications and deletions. Also possesses 5'-3' exonuclease activity on nicked or gapped double-stranded DNA. In Methanococcoides burtonii (strain DSM 6242 / NBRC 107633 / OCM 468 / ACE-M), this protein is Flap endonuclease 1.